Reading from the N-terminus, the 1614-residue chain is Adenylate cyclase type 10 (1614 aa).

Guanylate cyclase domains are found at residues 42-179 (VLMF…RLAQ) and 293-418 (TIVF…ARMM). The Mg(2+) site is built by aspartate 47 and isoleucine 48. 47–52 (DISGFT) lines the ATP pocket. Hydrogencarbonate is bound at residue lysine 95. Mg(2+) is bound at residue aspartate 99. ATP is bound by residues aspartate 99 and lysine 144. Hydrogencarbonate-binding residues include valine 167, arginine 176, and methionine 337. ATP contacts are provided by residues valine 406 and 412–416 (NIAAR).

This sequence belongs to the adenylyl cyclase class-4/guanylyl cyclase family. Mg(2+) serves as cofactor. Requires Mn(2+) as cofactor. As to expression, expressed in testis.

Its subcellular location is the cell membrane. It is found in the cytoplasm. The protein localises to the cytoskeleton. The protein resides in the perinuclear region. It localises to the nucleus. Its subcellular location is the cell projection. It is found in the cilium. The protein localises to the mitochondrion. The enzyme catalyses ATP = 3',5'-cyclic AMP + diphosphate. Activated by manganese or magnesium ions. In the presence of magnesium ions, the enzyme is activated by bicarbonate. Calcium mildly increases the enzyme activity, also in the presence of magnesium ions. In terms of biological role, catalyzes the formation of the signaling molecule cAMP. May function as sensor that mediates responses to changes in cellular bicarbonate and CO(2) levels. Has a critical role in mammalian spermatogenesis by producing the cAMP which regulates cAMP-responsive nuclear factors indispensable for sperm maturation in the epididymis. Induces capacitation, the maturational process that sperm undergo prior to fertilization. Involved in ciliary beat regulation. In Mus musculus (Mouse), this protein is Adenylate cyclase type 10 (Adcy10).